The sequence spans 455 residues: Phosphoglycerate kinase, glycosomal (455 aa).

(2R)-3-phosphoglycerate is bound by residues Val-23, Asp-24, Phe-25, Asn-26, Arg-39, Ser-61, His-62, Gly-64, Arg-65, Arg-132, His-168, and Arg-169. Positions 214 and 215 each coordinate ADP. Gly-214 contacts CDP. Residues Ala-215 and Lys-216 each coordinate AMP. Ala-215 is a binding site for ATP. Ala-215 contacts Mg(2+). Residue Lys-216 participates in (2R)-3-phosphoglycerate binding. Asp-219 contacts CDP. Asp-219 contacts Mg(2+). Positions 220 and 238 each coordinate ADP. AMP is bound at residue Lys-220. ATP is bound at residue Lys-220. Gly-238 provides a ligand contact to CDP. AMP is bound by residues Ala-239 and Ala-311. 2 residues coordinate ATP: Ala-239 and Ala-311. ADP is bound by residues Ala-311 and Asn-335. Gly-336 and Phe-341 together coordinate CDP. ADP-binding residues include Phe-341, Glu-342, Asp-374, and Thr-375. Glu-342 is a binding site for AMP. Glu-342, Asp-374, and Thr-375 together coordinate ATP. Asp-374 contacts Mg(2+). The segment at 417–455 (DAKAPAAAAAAGGDCPCGSGCAAVPAAATATVSMVLASP) is topogenic signal.

The protein belongs to the phosphoglycerate kinase family. As to quaternary structure, monomer. Mg(2+) is required as a cofactor.

The protein localises to the glycosome. The catalysed reaction is (2R)-3-phosphoglycerate + ATP = (2R)-3-phospho-glyceroyl phosphate + ADP. It participates in carbohydrate degradation; glycolysis; pyruvate from D-glyceraldehyde 3-phosphate: step 2/5. This is Phosphoglycerate kinase, glycosomal (PGKC) from Crithidia fasciculata.